The chain runs to 275 residues: NH(3)-dependent NAD(+) synthetase (275 aa).

50–57 is a binding site for ATP; it reads GISGGVDS. Aspartate 56 is a Mg(2+) binding site. Arginine 147 contributes to the deamido-NAD(+) binding site. ATP is bound at residue threonine 167. Glutamate 172 provides a ligand contact to Mg(2+). Residues lysine 180 and aspartate 187 each contribute to the deamido-NAD(+) site. ATP contacts are provided by lysine 196 and threonine 218. 267-268 serves as a coordination point for deamido-NAD(+); the sequence is HK.

Belongs to the NAD synthetase family. In terms of assembly, homodimer.

It catalyses the reaction deamido-NAD(+) + NH4(+) + ATP = AMP + diphosphate + NAD(+) + H(+). The protein operates within cofactor biosynthesis; NAD(+) biosynthesis; NAD(+) from deamido-NAD(+) (ammonia route): step 1/1. Catalyzes the ATP-dependent amidation of deamido-NAD to form NAD. Uses ammonia as a nitrogen source. The sequence is that of NH(3)-dependent NAD(+) synthetase from Pseudomonas putida (strain GB-1).